The sequence spans 257 residues: Snake venom serine protease Haly-2 (257 aa).

Positions 1–18 (MVLIRVLANLLILQLSYA) are cleaved as a signal peptide. Positions 19–24 (QKSSEL) are excised as a propeptide. The Peptidase S1 domain occupies 25–248 (IIGGDECNIN…HLEWIRSIIA (224 aa)). 6 disulfides stabilise this stretch: C31-C162, C49-C65, C97-C255, C141-C209, C173-C188, and C199-C224. Residue H64 is the Charge relay system of the active site. N-linked (GlcNAc...) asparagine glycosylation is present at N100. Residue D109 is the Charge relay system of the active site. The active-site Charge relay system is S203.

The protein belongs to the peptidase S1 family. Snake venom subfamily. Monomer. As to expression, expressed by the venom gland.

It is found in the secreted. Functionally, snake venom serine protease that may act in the hemostasis system of the prey. The chain is Snake venom serine protease Haly-2 from Gloydius brevicauda (Korean slamosa snake).